Consider the following 253-residue polypeptide: MRKPIIAGNWKMNKTLGEAVSFVEEVKSSIPYPDKVEAIVCAPALFLEKLNSLSNGTDLKIGAQNMHFEENGAFTGEISPAALKDLGIGYSVIGHSERREFFAETDETVNKKAHAAFKHGIVPIICVGETLEEREAGKTNELVADQVKKALAGFTTQQVAESVIAYEPIWAIGTGKSSTAKDANDVCAHIRQTVASEYGQEAADSLRIQYGGSVKPANIKEYMAESDIDGALVGGASLEPQSFVQLLEEGQYE.

9–11 serves as a coordination point for substrate; it reads NWK. The active-site Electrophile is histidine 95. The Proton acceptor role is filled by glutamate 167. Residues glycine 173, serine 213, and 234 to 235 contribute to the substrate site; that span reads GG. Phosphoserine is present on serine 213.

The protein belongs to the triosephosphate isomerase family. In terms of assembly, homodimer.

The protein resides in the cytoplasm. It catalyses the reaction D-glyceraldehyde 3-phosphate = dihydroxyacetone phosphate. Its pathway is carbohydrate biosynthesis; gluconeogenesis. The protein operates within carbohydrate degradation; glycolysis; D-glyceraldehyde 3-phosphate from glycerone phosphate: step 1/1. Its function is as follows. Involved in the gluconeogenesis. Catalyzes stereospecifically the conversion of dihydroxyacetone phosphate (DHAP) to D-glyceraldehyde-3-phosphate (G3P). This is Triosephosphate isomerase from Bacillus pumilus (strain SAFR-032).